The primary structure comprises 283 residues: Bifunctional protein FolD (283 aa).

166 to 168 (GAS) is a binding site for NADP(+).

It belongs to the tetrahydrofolate dehydrogenase/cyclohydrolase family. In terms of assembly, homodimer.

The enzyme catalyses (6R)-5,10-methylene-5,6,7,8-tetrahydrofolate + NADP(+) = (6R)-5,10-methenyltetrahydrofolate + NADPH. It carries out the reaction (6R)-5,10-methenyltetrahydrofolate + H2O = (6R)-10-formyltetrahydrofolate + H(+). The protein operates within one-carbon metabolism; tetrahydrofolate interconversion. Functionally, catalyzes the oxidation of 5,10-methylenetetrahydrofolate to 5,10-methenyltetrahydrofolate and then the hydrolysis of 5,10-methenyltetrahydrofolate to 10-formyltetrahydrofolate. The chain is Bifunctional protein FolD from Coxiella burnetii (strain Dugway 5J108-111).